Consider the following 3564-residue polypeptide: MTAWRRFQSLLLLLGLLVLCARLLTAAKGQNCGGLVQGPNGTIESPGFPHGYPNYANCTWIIITGERNRIQLSFHTFALEEDFDILSVYDGQPQQGNLKVRLSGFQLPSSIVSTGSILTLWFTTDFAVSAQGFKALYEVLPSHTCGNPGEILKGVLHGTRFNIGDKIRYSCLPGYILEGHAILTCIVSPGNGASWDFPAPFCRAEGACGGTLRGTSSSISSPHFPSEYENNADCTWTILAEPGDTIALVFTDFQLEEGYDFLEISGTEAPSIWLTGMNLPSPVISSKNWLRLHFTSDSNHRRKGFNAQFQVKKAIELKSRGVKMLPSKDGSHKNSVLSQGGVALVSDMCPDPGIPENGRRAGSDFRVGANVQFSCEDNYVLQGSKSITCQRVTETLAAWSDHRPICRARTCGSNLRGPSGVITSPNYPVQYEDNAHCVWVITTTDPDKVIKLAFEEFELERGYDTLTVGDAGKVGDTRSVLYVLTGSSVPDLIVSMSNQMWLHLQSDDSIGSPGFKAVYQEIEKGGCGDPGIPAYGKRTGSSFLHGDTLTFECPAAFELVGERVITCQQNNQWSGNKPSCVFSCFFNFTASSGIILSPNYPEEYGNNMNCVWLIISEPGSRIHLIFNDFDVEPQFDFLAVKDDGISDITVLGTFSGNEVPSQLASSGHIVRLEFQSDHSTTGRGFNITYTTFGQNECHDPGIPINGRRFGDRFLLGSSVSFHCDDGFVKTQGSESITCILQDGNVVWSSTVPRCEAPCGGHLTASSGVILPPGWPGYYKDSLHCEWIIEAKPGHSIKITFDRFQTEVNYDTLEVRDGPASSSPLIGEYHGTQAPQFLISTGNFMYLLFTTDNSRSSIGFLIHYESVTLESDSCLDPGIPVNGHRHGGDFGIRSTVTFSCDPGYTLSDDEPLVCERNHQWNHALPSCDALCGGYIQGKSGTVLSPGFPDFYPNSLNCTWTIEVSHGKGVQMIFHTFHLESSHDYLLITEDGSFSEPVARLTGSVLPHTIKAGLFGNFTAQLRFISDFSISYEGFNITFSEYDLEPCDDPGVPAFSRRIGFHFGVGDSLTFSCFLGYRLEGATKLTCLGGGRRVWSAPLPRCVAECGASVKGNEGTLLSPNFPSNYDNNHECIYKIETEAGKGIHLRTRSFQLFEGDTLKVYDGKDSSSRPLGTFTKNELLGLILNSTSNHLWLEFNTNGSDTDQGFQLTYTSFDLVKCEDPGIPNYGYRIRDEGHFTDTVVLYSCNPGYAMHGSNTLTCLSGDRRVWDKPLPSCIAECGGQIHAATSGRILSPGYPAPYDNNLHCTWIIEADPGKTISLHFIVFDTEMAHDILKVWDGPVDSDILLKEWSGSALPEDIHSTFNSLTLQFDSDFFISKSGFSIQFSTSIAATCNDPGMPQNGTRYGDSREAGDTVTFQCDPGYQLQGQAKITCVQLNNRFFWQPDPPTCIAACGGNLTGPAGVILSPNYPQPYPPGKECDWRVKVNPDFVIALIFKSFNMEPSYDFLHIYEGEDSNSPLIGSYQGSQAPERIESSGNSLFLAFRSDASVGLSGFAIEFKEKPREACFDPGNIMNGTRVGTDFKLGSTITYQCDSGYKILDPSSITCVIGADGKPSWDQVLPSCNAPCGGQYTGSEGVVLSPNYPHNYTAGQICLYSITVPKEFVVFGQFAYFQTALNDLAELFDGTHAQARLLSSLSGSHSGETLPLATSNQILLRFSAKSGASARGFHFVYQAVPRTSDTQCSSVPEPRYGRRIGSEFSAGSIVRFECNPGYLLQGSTALHCQSVPNALAQWNDTIPSCVVPCSGNFTQRRGTILSPGYPEPYGNNLNCIWKIIVTEGSGIQIQVISFATEQNWDSLEIHDGGDVTAPRLGSFSGTTVPALLNSTSNQLYLHFQSDISVAAAGFHLEYKTVGLAACQEPALPSNSIKIGDRYMVNDVLSFQCEPGYTLQGRSHISCMPGTVRRWNYPSPLCIATCGGTLSTLGGVILSPGFPGSYPNNLDCTWRISLPIGYGAHIQFLNFSTEANHDFLEIQNGPYHTSPMIGQFSGTDLPAALLSTTHETLIHFYSDHSQNRQGFKLAYQAYELQNCPDPPPFQNGYMINSDYSVGQSVSFECYPGYILIGHPVLTCQHGINRNWNYPFPRCDAPCGYNVTSQNGTIYSPGFPDEYPILKDCIWLITVPPGHGVYINFTLLQTEAVNDYIAVWDGPDQNSPQLGVFSGNTALETAYSSTNQVLLKFHSDFSNGGFFVLNFHAFQLKKCQPPPAVPQAEMLTEDDDFEIGDFVKYQCHPGYTLVGTDILTCKLSSQLQFEGSLPTCEAQCPANEVRTGSSGVILSPGYPGNYFNSQTCSWSIKVEPNYNITIFVDTFQSEKQFDALEVFDGSSGQSPLLVVLSGNHTEQSNFTSRSNQLYLRWSTDHATSKKGFKIRYAAPYCSLTHPLKNGGILNRTAGAVGSKVHYFCKPGYRMVGHSNATCRRNPLGMYQWDSLTPLCQAVSCGIPESPGNGSFTGNEFTLDSKVVYECHEGFKLESSQQATAVCQEDGLWSNKGKPPTCKPVACPSIEAQLSEHVIWRLVSGSLNEYGAQVLLSCSPGYYLEGWRLLRCQANGTWNIGDERPSCRVISCGSLSFPPNGNKIGTLTVYGATAIFTCNTGYTLVGSHVRECLANGLWSGSETRCLAGHCGSPDPIVNGHISGDGFSYRDTVVYQCNPGFRLVGTSVRICLQDHKWSGQTPVCVPITCGHPGNPAHGFTNGSEFNLNDVVNFTCNTGYLLQGVSRAQCRSNGQWSSPLPTCRVVNCSDPGFVENAIRHGQQNFPESFEYGMSILYHCKKGFYLLGSSALTCMANGLWDRSLPKCLAISCGHPGVPANAVLTGELFTYGAVVHYSCRGSESLIGNDTRVCQEDSHWSGALPHCTGNNPGFCGDPGTPAHGSRLGDDFKTKSLLRFSCEMGHQLRGSPERTCLLNGSWSGLQPVCEAVSCGNPGTPTNGMIVSSDGILFSSSVIYACWEGYKTSGLMTRHCTANGTWTGTAPDCTIISCGDPGTLANGIQFGTDFTFNKTVSYQCNPGYVMEAVTSATIRCTKDGRWNPSKPVCKAVLCPQPPPVQNGTVEGSDFRWGSSISYSCMDGYQLSHSAILSCEGRGVWKGEIPQCLPVFCGDPGIPAEGRLSGKSFTYKSEVFFQCKSPFILVGSSRRVCQADGTWSGIQPTCIDPAHNTCPDPGTPHFGIQNSSRGYEVGSTVFFRCRKGYHIQGSTTRTCLANLTWSGIQTECIPHACRQPETPAHADVRAIDLPTFGYTLVYTCHPGFFLAGGSEHRTCKADMKWTGKSPVCKSKGVREVNETVTKTPVPSDVFFVNSLWKGYYEYLGKRQPATLTVDWFNATSSKVNATFSEASPVELKLTGIYKKEEAHLLLKAFQIKGQADIFVSKFENDNWGLDGYVSSGLERGGFTFQGDIHGKDFGKFKLERQDPLNPDQDSSSHYHGTSSGSVAAAILVPFFALILSGFAFYLYKHRTRPKVQYNGYAGHENSNGQASFENPMYDTNLKPTEAKAVRFDTTLNTVCTVV.

The first 26 residues, 1-26 (MTAWRRFQSLLLLLGLLVLCARLLTA), serve as a signal peptide directing secretion. At 27–3487 (AKGQNCGGLV…SHYHGTSSGS (3461 aa)) the chain is on the extracellular side. 10 disulfides stabilise this stretch: C32–C58, C145–C185, C171–C202, C208–C234, C349–C389, C375–C406, C411–C437, C527–C567, C553–C580, and C584–C610. Residues 32-140 (CGGLVQGPNG…QGFKALYEVL (109 aa)) form the CUB 1 domain. N-linked (GlcNAc...) asparagine glycans are attached at residues N40 and N57. The Sushi 1 domain maps to 143–204 (HTCGNPGEIL…WDFPAPFCRA (62 aa)). The CUB 2 domain occupies 208 to 312 (CGGTLRGTSS…KGFNAQFQVK (105 aa)). The region spanning 347-408 (DMCPDPGIPE…WSDHRPICRA (62 aa)) is the Sushi 2 domain. In terms of domain architecture, CUB 3 spans 411–522 (CGSNLRGPSG…PGFKAVYQEI (112 aa)). The Sushi 3 domain maps to 525-582 (GGCGDPGIPAYGKRTGSSFLHGDTLTFECPAAFELVGERVITCQQNNQWSGNKPSCVF). A CUB 4 domain is found at 584–692 (CFFNFTASSG…RGFNITYTTF (109 aa)). N-linked (GlcNAc...) asparagine glycans are attached at residues N587 and N686. In terms of domain architecture, Sushi 4 spans 695–756 (NECHDPGIPI…WSSTVPRCEA (62 aa)). 6 cysteine pairs are disulfide-bonded: C697–C738, C723–C754, C758–C784, C873–C913, C899–C926, and C930–C956. A CUB 5 domain is found at 758–866 (CGGHLTASSG…IGFLIHYESV (109 aa)). Residues 871 to 928 (DSCLDPGIPVNGHRHGGDFGIRSTVTFSCDPGYTLSDDEPLVCERNHQWNHALPSCDA) form the Sushi 5 domain. Positions 930–1040 (CGGYIQGKSG…EGFNITFSEY (111 aa)) constitute a CUB 6 domain. Residues N955, N1015, and N1034 are each glycosylated (N-linked (GlcNAc...) asparagine). A Sushi 6 domain is found at 1043–1102 (EPCDDPGVPAFSRRIGFHFGVGDSLTFSCFLGYRLEGATKLTCLGGGRRVWSAPLPRCVA). Disulfide bonds link C1045–C1085, C1071–C1100, and C1104–C1130. The 109-residue stretch at 1104–1212 (CGASVKGNEG…QGFQLTYTSF (109 aa)) folds into the CUB 7 domain. N-linked (GlcNAc...) asparagine glycans are attached at residues N1184 and N1197. A Sushi 7 domain is found at 1215–1275 (VKCEDPGIPN…WDKPLPSCIA (61 aa)). Cystine bridges form between C1217-C1258, C1244-C1273, C1277-C1304, C1391-C1431, C1417-C1447, C1451-C1477, C1564-C1604, C1590-C1621, C1625-C1651, C1741-C1781, C1767-C1798, and C1802-C1828. Residues 1277–1386 (CGGQIHAATS…SGFSIQFSTS (110 aa)) form the CUB 8 domain. One can recognise a Sushi 8 domain in the interval 1389-1449 (ATCNDPGMPQ…WQPDPPTCIA (61 aa)). The N-linked (GlcNAc...) asparagine glycan is linked to N1399. Residues 1451 to 1559 (CGGNLTGPAG…SGFAIEFKEK (109 aa)) enclose the CUB 9 domain. N-linked (GlcNAc...) asparagine glycosylation is found at N1454 and N1572. Residues 1562–1623 (EACFDPGNIM…WDQVLPSCNA (62 aa)) form the Sushi 9 domain. The 109-residue stretch at 1625-1733 (CGGQYTGSEG…RGFHFVYQAV (109 aa)) folds into the CUB 10 domain. A glycan (N-linked (GlcNAc...) asparagine) is linked at N1644. In terms of domain architecture, Sushi 10 spans 1739–1800 (TQCSSVPEPR…WNDTIPSCVV (62 aa)). N1792, N1805, and N1882 each carry an N-linked (GlcNAc...) asparagine glycan. Residues 1802-1910 (CSGNFTQRRG…AGFHLEYKTV (109 aa)) enclose the CUB 11 domain. The Sushi 11 domain maps to 1913-1972 (AACQEPALPSNSIKIGDRYMVNDVLSFQCEPGYTLQGRSHISCMPGTVRRWNYPSPLCIA). Intrachain disulfides connect C1915-C1955, C1941-C1970, and C1974-C2000. One can recognise a CUB 12 domain in the interval 1974-2082 (CGGTLSTLGG…QGFKLAYQAY (109 aa)). N-linked (GlcNAc...) asparagine glycosylation occurs at N2018. Residues 2085 to 2144 (QNCPDPPPFQNGYMINSDYSVGQSVSFECYPGYILIGHPVLTCQHGINRNWNYPFPRCDA) form the Sushi 12 domain. 3 disulfide bridges follow: C2087–C2127, C2113–C2142, and C2146–C2172. A CUB 13 domain is found at 2146–2257 (CGYNVTSQNG…LNFHAFQLKK (112 aa)). N-linked (GlcNAc...) asparagine glycans are attached at residues N2149, N2154, and N2187. The 62-residue stretch at 2256–2317 (KKCQPPPAVP…FEGSLPTCEA (62 aa)) folds into the Sushi 13 domain. Disulfide bonds link C2258-C2300, C2286-C2315, and C2319-C2347. The 112-residue stretch at 2319–2430 (CPANEVRTGS…KGFKIRYAAP (112 aa)) folds into the CUB 14 domain. Residues N2358, N2394, N2400, N2445, N2470, and N2503 are each glycosylated (N-linked (GlcNAc...) asparagine). Sushi domains lie at 2430–2492 (PYCS…LCQA), 2493–2554 (VSCG…TCKP), 2555–2619 (VACP…SCRV), 2620–2677 (ISCG…RCLA), 2678–2735 (GHCG…VCVP), 2736–2793 (ITCG…TCRV), 2794–2856 (VNCS…KCLA), 2857–2914 (ISCG…HCTG), 2918–2975 (GFCG…VCEA), 2976–3034 (VSCG…DCTI), 3035–3094 (ISCG…VCKA), 3095–3152 (VLCP…QCLP), 3153–3210 (VFCG…TCID), 3214–3272 (NTCP…ECIP), and 3273–3332 (HACR…VCKS). Intrachain disulfides connect C2432–C2473, C2459–C2490, C2495–C2537, C2521–C2552, C2557–C2602, C2588–C2617, C2622–C2662, C2648–C2675, C2680–C2720, C2706–C2733, C2738–C2778, and C2764–C2791. N-linked (GlcNAc...) asparagine glycosylation is present at N2605. N-linked (GlcNAc...) asparagine glycosylation is found at N2750 and N2761. N2795 carries N-linked (GlcNAc...) asparagine glycosylation. Cystine bridges form between C2796–C2841, C2827–C2854, C2859–C2899, C2885–C2912, C2920–C2960, C2946–C2973, C2978–C3019, C3005–C3032, C3037–C3079, C3063–C3092, C3097–C3137, C3123–C3150, C3155–C3195, C3181–C3208, C3216–C3257, C3243–C3270, C3275–C3317, and C3302–C3330. N-linked (GlcNAc...) asparagine glycosylation is present at N2894. N2963 carries N-linked (GlcNAc...) asparagine glycosylation. Residues N3022 and N3056 are each glycosylated (N-linked (GlcNAc...) asparagine). N3105 carries an N-linked (GlcNAc...) asparagine glycan. Residues N3228 and N3260 are each glycosylated (N-linked (GlcNAc...) asparagine). N3339, N3379, and N3386 each carry an N-linked (GlcNAc...) asparagine glycan. The chain crosses the membrane as a helical span at residues 3488–3508 (VAAAILVPFFALILSGFAFYL). Residues 3509-3564 (YKHRTRPKVQYNGYAGHENSNGQASFENPMYDTNLKPTEAKAVRFDTTLNTVCTVV) lie on the Cytoplasmic side of the membrane.

The protein belongs to the CSMD family. In terms of tissue distribution, weakly expressed in most tissues, except in brain. Expressed at intermediate level in brain, including cerebellum, substantia nigra, hippocampus and fetal brain.

The protein localises to the membrane. Potential suppressor of squamous cell carcinomas. The sequence is that of CUB and sushi domain-containing protein 1 (CSMD1) from Homo sapiens (Human).